A 347-amino-acid chain; its full sequence is Doublecortin domain-containing protein 2C (347 aa).

2 Doublecortin domains span residues 16 to 98 and 136 to 217; these read KTIL…LDYI and RYIN…IPYW. The interval 235-260 is disordered; the sequence is KYTQTKKRVESKVKEPLQNDSVPPRS. Basic and acidic residues predominate over residues 241-251; sequence KRVESKVKEPL.

It localises to the cell projection. The protein resides in the cilium. It is found in the flagellum. Its subcellular location is the cytoplasm. The polypeptide is Doublecortin domain-containing protein 2C (Mus musculus (Mouse)).